Consider the following 117-residue polypeptide: Hydrogenase maturation factor HypA (117 aa).

H2 serves as a coordination point for Ni(2+). The Zn(2+) site is built by C73, C76, C89, and C92.

It belongs to the HypA/HybF family.

In terms of biological role, involved in the maturation of [NiFe] hydrogenases. Required for nickel insertion into the metal center of the hydrogenase. The sequence is that of Hydrogenase maturation factor HypA from Shewanella baltica (strain OS185).